We begin with the raw amino-acid sequence, 81 residues long: Small ribosomal subunit protein bS18 (81 aa).

Belongs to the bacterial ribosomal protein bS18 family. In terms of assembly, part of the 30S ribosomal subunit. Forms a tight heterodimer with protein bS6.

In terms of biological role, binds as a heterodimer with protein bS6 to the central domain of the 16S rRNA, where it helps stabilize the platform of the 30S subunit. This is Small ribosomal subunit protein bS18 from Desulfotalea psychrophila (strain LSv54 / DSM 12343).